The chain runs to 550 residues: Membrane protein insertase YidC (550 aa).

The helical transmembrane segment at 6 to 26 (NLLVIALLFVSFMIWQTWEQD) threads the bilayer. Disordered regions lie at residues 28-54 (APKP…GVPA) and 111-132 (QSGL…RPLY). A compositionally biased stretch (low complexity) spans 30-52 (KPQVQQTTQTTTTAAGSAASQGV). Residues 111-127 (QSGLTGRNGPDNPNNNK) are compositionally biased toward polar residues. 4 helical membrane-spanning segments follow: residues 346 to 366 (KWIH…TFIV), 421 to 441 (LGGC…YYML), 459 to 479 (LSAQ…MFFI), and 500 to 520 (PVIF…YYIV).

This sequence belongs to the OXA1/ALB3/YidC family. Type 1 subfamily. In terms of assembly, interacts with the Sec translocase complex via SecD. Specifically interacts with transmembrane segments of nascent integral membrane proteins during membrane integration.

It is found in the cell inner membrane. In terms of biological role, required for the insertion and/or proper folding and/or complex formation of integral membrane proteins into the membrane. Involved in integration of membrane proteins that insert both dependently and independently of the Sec translocase complex, as well as at least some lipoproteins. Aids folding of multispanning membrane proteins. This Cronobacter sakazakii (strain ATCC BAA-894) (Enterobacter sakazakii) protein is Membrane protein insertase YidC.